Here is a 70-residue protein sequence, read N- to C-terminus: Large ribosomal subunit protein bL28 (70 aa).

The protein belongs to the bacterial ribosomal protein bL28 family.

This Thermosipho melanesiensis (strain DSM 12029 / CIP 104789 / BI429) protein is Large ribosomal subunit protein bL28.